Reading from the N-terminus, the 366-residue chain is Transcription factor bHLH74 (366 aa).

Residues 1–11 (MGGESNEGGEM) show a composition bias toward gly residues. 2 disordered regions span residues 1–20 (MGGESNEGGEMGFKHGDDES) and 123–201 (GESS…APKE). Composition is skewed to basic and acidic residues over residues 123 to 134 (GESSHEDHHQVS) and 159 to 170 (KAVEEFQEDPQR). A bHLH domain is found at 212–262 (QATNSHSLAERVRREKISERMRLLQELVPGCNKITGKAVMLDEIINYVQSL).

Homodimer. Interacts with IBH1. Binds reversibly to CRY2 after blue light illumination. In terms of tissue distribution, expressed constitutively in roots, leaves, stems, and flowers.

It localises to the nucleus. Functionally, transcriptional activator involved in cell elongation. Regulates the expression of a subset of genes involved in cell expansion by binding to the G-box motif. Binds to chromatin DNA of the FT gene and promotes its expression, and thus triggers flowering in response to blue light. The chain is Transcription factor bHLH74 (BHLH74) from Arabidopsis thaliana (Mouse-ear cress).